The sequence spans 437 residues: Methylenetetrahydrofolate--tRNA-(uracil-5-)-methyltransferase TrmFO (437 aa).

9 to 14 (GGGLAG) provides a ligand contact to FAD.

This sequence belongs to the MnmG family. TrmFO subfamily. FAD is required as a cofactor.

It localises to the cytoplasm. It catalyses the reaction uridine(54) in tRNA + (6R)-5,10-methylene-5,6,7,8-tetrahydrofolate + NADH + H(+) = 5-methyluridine(54) in tRNA + (6S)-5,6,7,8-tetrahydrofolate + NAD(+). The catalysed reaction is uridine(54) in tRNA + (6R)-5,10-methylene-5,6,7,8-tetrahydrofolate + NADPH + H(+) = 5-methyluridine(54) in tRNA + (6S)-5,6,7,8-tetrahydrofolate + NADP(+). Catalyzes the folate-dependent formation of 5-methyl-uridine at position 54 (M-5-U54) in all tRNAs. The sequence is that of Methylenetetrahydrofolate--tRNA-(uracil-5-)-methyltransferase TrmFO from Moorella thermoacetica (strain ATCC 39073 / JCM 9320).